Consider the following 203-residue polypeptide: Holliday junction branch migration complex subunit RuvA (203 aa).

The domain I stretch occupies residues 1-64 (MIGRLRGIIL…EDAQLLYGFN (64 aa)). Residues 65–142 (NKQERTLFKE…KGLHGDLFTP (78 aa)) are domain II. The flexible linker stretch occupies residues 143-154 (AVDLVLTSPASP). A domain III region spans residues 155–203 (GSEDAEQEAVAALVALGYKPQEASRMVSKIARPDASSETLIRDALRAAL).

This sequence belongs to the RuvA family. As to quaternary structure, homotetramer. Forms an RuvA(8)-RuvB(12)-Holliday junction (HJ) complex. HJ DNA is sandwiched between 2 RuvA tetramers; dsDNA enters through RuvA and exits via RuvB. An RuvB hexamer assembles on each DNA strand where it exits the tetramer. Each RuvB hexamer is contacted by two RuvA subunits (via domain III) on 2 adjacent RuvB subunits; this complex drives branch migration. In the full resolvosome a probable DNA-RuvA(4)-RuvB(12)-RuvC(2) complex forms which resolves the HJ.

Its subcellular location is the cytoplasm. The RuvA-RuvB-RuvC complex processes Holliday junction (HJ) DNA during genetic recombination and DNA repair, while the RuvA-RuvB complex plays an important role in the rescue of blocked DNA replication forks via replication fork reversal (RFR). RuvA specifically binds to HJ cruciform DNA, conferring on it an open structure. The RuvB hexamer acts as an ATP-dependent pump, pulling dsDNA into and through the RuvAB complex. HJ branch migration allows RuvC to scan DNA until it finds its consensus sequence, where it cleaves and resolves the cruciform DNA. In Salmonella schwarzengrund (strain CVM19633), this protein is Holliday junction branch migration complex subunit RuvA.